The following is a 284-amino-acid chain: Phosphatidylglycerol--prolipoprotein diacylglyceryl transferase (284 aa).

The next 7 membrane-spanning stretches (helical) occupy residues 14–34 (IAFSLGSIEVHWYGLAYACAI), 62–82 (YFLWAELGIVLGARVGYILIY), 106–126 (FVGIRGMSYHGGLVGFLIASY), 136–156 (LLIYLDLIAISLPLGYVFGRI), 190–210 (PSQLIEAFLEGVIVFLMVLWA), 218–238 (GLLIVVYGLGYSLMRFIAEFY), and 252–272 (LSMGQILSLLMVIVSLGILLY). R155 is a binding site for a 1,2-diacyl-sn-glycero-3-phospho-(1'-sn-glycerol).

This sequence belongs to the Lgt family.

The protein resides in the cell inner membrane. It catalyses the reaction L-cysteinyl-[prolipoprotein] + a 1,2-diacyl-sn-glycero-3-phospho-(1'-sn-glycerol) = an S-1,2-diacyl-sn-glyceryl-L-cysteinyl-[prolipoprotein] + sn-glycerol 1-phosphate + H(+). Its pathway is protein modification; lipoprotein biosynthesis (diacylglyceryl transfer). Catalyzes the transfer of the diacylglyceryl group from phosphatidylglycerol to the sulfhydryl group of the N-terminal cysteine of a prolipoprotein, the first step in the formation of mature lipoproteins. This is Phosphatidylglycerol--prolipoprotein diacylglyceryl transferase from Helicobacter pylori (strain Shi470).